The sequence spans 637 residues: Early transcription factor 70 kDa subunit (637 aa).

In terms of domain architecture, Helicase ATP-binding spans 32–185; the sequence is RTIIDENRSV…GHIIDLMSEE (154 aa). Residue 45-52 participates in ATP binding; it reads HIMGSGKT. The DEXH box motif lies at 135-138; sequence DEAH. In terms of domain architecture, Helicase C-terminal spans 327 to 507; it reads KFKYFINRIQ…VLPFDIKKLL (181 aa).

Belongs to the helicase family. VETF subfamily. Heterodimer of a 70 kDa and a 82 kDa subunit. Part of the early transcription complex composed of ETF, RAP94/OPG109, and the DNA-directed RNA polymerase.

It localises to the virion. Functionally, acts with RNA polymerase to initiate transcription from early gene promoters. Is recruited by the RPO-associated protein of 94 kDa RAP94/OPG109 to form the early transcription complex, which also contains the core RNA polymerase. ETF heterodimer binds to early gene promoters. The polypeptide is Early transcription factor 70 kDa subunit (OPG118) (Homo sapiens (Human)).